Consider the following 756-residue polypeptide: Ent-kaur-16-ene synthase, chloroplastic (756 aa).

Mg(2+) is bound by residues aspartate 496, aspartate 500, asparagine 639, and glutamate 647. The DDXXD motif motif lies at 496–500 (DDFFD).

It belongs to the terpene synthase family. Mg(2+) serves as cofactor. As to expression, highly expressed in panicles and at lower levels in leaves and stems.

It is found in the plastid. It localises to the chloroplast. It catalyses the reaction ent-copalyl diphosphate = ent-kaur-16-ene + diphosphate. Its pathway is plant hormone biosynthesis; gibberellin biosynthesis. In terms of biological role, catalyzes the conversion of ent-copalyl diphosphate to the gibberellin precursor ent-kaur-16-ene. This is Ent-kaur-16-ene synthase, chloroplastic (KS1) from Oryza sativa subsp. japonica (Rice).